Here is a 194-residue protein sequence, read N- to C-terminus: 7-methyl-GTP pyrophosphatase (194 aa).

Asp69 acts as the Proton acceptor in catalysis.

This sequence belongs to the Maf family. YceF subfamily. The cofactor is a divalent metal cation.

It is found in the cytoplasm. The catalysed reaction is N(7)-methyl-GTP + H2O = N(7)-methyl-GMP + diphosphate + H(+). Nucleoside triphosphate pyrophosphatase that hydrolyzes 7-methyl-GTP (m(7)GTP). May have a dual role in cell division arrest and in preventing the incorporation of modified nucleotides into cellular nucleic acids. The polypeptide is 7-methyl-GTP pyrophosphatase (yceF1) (Shigella boydii serotype 4 (strain Sb227)).